A 142-amino-acid chain; its full sequence is Glia maturation factor gamma (142 aa).

At Ser-2 the chain carries N-acetylserine. Residues 4 to 139 (SLVVCEVDPE…TETWLKEKLA (136 aa)) enclose the ADF-H domain.

It belongs to the actin-binding proteins ADF family. GMF subfamily.

This Mus musculus (Mouse) protein is Glia maturation factor gamma (Gmfg).